Reading from the N-terminus, the 145-residue chain is Putative pre-16S rRNA nuclease (145 aa).

This sequence belongs to the YqgF nuclease family.

The protein localises to the cytoplasm. Could be a nuclease involved in processing of the 5'-end of pre-16S rRNA. The polypeptide is Putative pre-16S rRNA nuclease (Opitutus terrae (strain DSM 11246 / JCM 15787 / PB90-1)).